We begin with the raw amino-acid sequence, 189 residues long: GTP cyclohydrolase 1 (189 aa).

The Zn(2+) site is built by C78, H81, and C150.

Belongs to the GTP cyclohydrolase I family. Toroid-shaped homodecamer, composed of two pentamers of five dimers.

It carries out the reaction GTP + H2O = 7,8-dihydroneopterin 3'-triphosphate + formate + H(+). It functions in the pathway cofactor biosynthesis; 7,8-dihydroneopterin triphosphate biosynthesis; 7,8-dihydroneopterin triphosphate from GTP: step 1/1. The polypeptide is GTP cyclohydrolase 1 (Listeria monocytogenes serovar 1/2a (strain ATCC BAA-679 / EGD-e)).